A 338-amino-acid chain; its full sequence is Alcohol dehydrogenase (338 aa).

C38, H61, E62, C92, C95, C98, C106, and C148 together coordinate Zn(2+).

This sequence belongs to the zinc-containing alcohol dehydrogenase family. In terms of assembly, homotetramer. The cofactor is Zn(2+).

It carries out the reaction a primary alcohol + NAD(+) = an aldehyde + NADH + H(+). It catalyses the reaction a secondary alcohol + NAD(+) = a ketone + NADH + H(+). The enzyme catalyses ethanol + NAD(+) = acetaldehyde + NADH + H(+). The catalysed reaction is 1-propanol + NAD(+) = propanal + NADH + H(+). It carries out the reaction butan-1-ol + NAD(+) = butanal + NADH + H(+). It catalyses the reaction propan-2-ol + NAD(+) = acetone + NADH + H(+). Functionally, psychrophilic alcohol dehydrogenase that exhibits a wide range of substrate specificity, oxidizing mainly primary and secondary aliphatic alcohols, utilizing NAD(+) as a cosubstrate. In vitro, shows highest reaction rates for ethanol as a substrate and gradually decreases its reaction rates as the length and branching of the carbon chain of the alcohol substrates increase. To a lesser extent, is also able to reduce aldehydes and ketones. Do not catalyze the further oxidation of aldehydes to carboxylic acids. Cannot use NADP(+) instead of NAD(+). This Moraxella sp. (strain TAE123) protein is Alcohol dehydrogenase.